The sequence spans 533 residues: Fimbrial subunit type 1 (533 aa).

Positions 1-30 (MHSLNTRRGLGLAAAMTLAAGALVAPTGAA) are cleaved as a signal peptide. The LPXTG sorting signal signature appears at 496–500 (LPLTG). Thr499 bears the Pentaglycyl murein peptidoglycan amidated threonine mark. Positions 500-533 (GANGVIFLTIAGALLVAGGAVVAYANKRRHVAKH) are cleaved as a propeptide — removed by sortase.

The protein resides in the secreted. It is found in the cell wall. It localises to the fimbrium. Its function is as follows. Major fimbrial subunit of A.viscosus. This is Fimbrial subunit type 1 from Actinomyces viscosus.